A 78-amino-acid polypeptide reads, in one-letter code: U7-lycotoxin-Ls1h (78 aa).

The signal sequence occupies residues 1 to 22 (MKLIIFTGLTLLLIVSLIDVEA). The propeptide occupies 23–26 (QNEG).

This sequence belongs to the neurotoxin 19 (CSTX) family. 07 (U7-Lctx) subfamily. Post-translationally, contains 4 disulfide bonds. Expressed by the venom gland.

It is found in the secreted. This chain is U7-lycotoxin-Ls1h, found in Lycosa singoriensis (Wolf spider).